The primary structure comprises 516 residues: Lysophosphatidylcholine acyltransferase 2B (516 aa).

Asn-28 is a glycosylation site (N-linked (GlcNAc...) asparagine). The next 3 membrane-spanning stretches (helical) occupy residues Thr-44–Val-64, Cys-68–Pro-88, and Leu-102–Val-122. An HXXXXD motif motif is present at residues His-142–Asp-147. EF-hand domains are found at residues Pro-387–Pro-422 and Asn-424–Val-459. Residues Asp-400, Asn-402, Asp-404, Thr-406, Glu-411, Asp-437, Asp-439, Asp-441, Tyr-443, and Glu-448 each coordinate Ca(2+).

It belongs to the 1-acyl-sn-glycerol-3-phosphate acyltransferase family.

The protein resides in the membrane. It functions in the pathway lipid metabolism; phospholipid metabolism. In terms of biological role, probable acetyltransferase. The protein is Lysophosphatidylcholine acyltransferase 2B (Lpcat2b) of Mus musculus (Mouse).